Here is an 82-residue protein sequence, read N- to C-terminus: LPLSYGVVCVLGLCLNVVALYIFLCRLKTWNASTTYMFHLAVSDSLYAASLPLLVYYYAQGDHWPFSTVLCKLVRFLFYTNL.

The chain crosses the membrane as a helical span at residues 1–25 (LPLSYGVVCVLGLCLNVVALYIFLC). The Cytoplasmic segment spans residues 26–35 (RLKTWNASTT). A helical membrane pass occupies residues 36-56 (YMFHLAVSDSLYAASLPLLVY). The Extracellular portion of the chain corresponds to 57-75 (YYAQGDHWPFSTVLCKLVR). A helical transmembrane segment spans residues 76–82 (FLFYTNL).

This sequence belongs to the G-protein coupled receptor 1 family. As to expression, expressed in brain, heart, stria vascularis and vestibular labyrinth.

It localises to the cell membrane. Receptor for ATP and UTP coupled to G-proteins that activate a phosphatidylinositol-calcium second messenger system. Not activated by UDP. The protein is P2Y purinoceptor 2 (P2RY2) of Meriones unguiculatus (Mongolian jird).